Reading from the N-terminus, the 276-residue chain is Homeobox-leucine zipper protein HOX11 (276 aa).

A disordered region spans residues 1 to 92 (MVDGHLEAST…DDGGSARKKL (92 aa)). The segment covering 39-48 (LSSSPNNSAG) has biased composition (polar residues). A compositionally biased stretch (gly residues) spans 58 to 73 (HGLGGNDAAPGGGGGD). The segment at residues 87–146 (SARKKLRLSKEQSAFLEESFKEHSTLNPKQKLALAKQLNLRPRQVEVWFQNRRARTKLKQ) is a DNA-binding region (homeobox). The interval 145-189 (KQTEVDCEYLKRCCETLTEENRRLQKELAELRALKTVHPFYMHLP) is leucine-zipper. The disordered stretch occupies residues 214–244 (AATSSTAAPPAAPSSGGIAATSSSSAAAAAA).

The protein belongs to the HD-ZIP homeobox family. Class II subfamily. In terms of tissue distribution, expressed in stems, leaf sheaths and blades and panicles.

Its subcellular location is the nucleus. In terms of biological role, probable transcription factor. In Oryza sativa subsp. indica (Rice), this protein is Homeobox-leucine zipper protein HOX11 (HOX11).